A 156-amino-acid chain; its full sequence is ATP synthase subunit b (156 aa).

Residues 7-27 (LFAQMVVFLILAWFTMKFVWP) form a helical membrane-spanning segment.

Belongs to the ATPase B chain family. F-type ATPases have 2 components, F(1) - the catalytic core - and F(0) - the membrane proton channel. F(1) has five subunits: alpha(3), beta(3), gamma(1), delta(1), epsilon(1). F(0) has three main subunits: a(1), b(2) and c(10-14). The alpha and beta chains form an alternating ring which encloses part of the gamma chain. F(1) is attached to F(0) by a central stalk formed by the gamma and epsilon chains, while a peripheral stalk is formed by the delta and b chains.

The protein resides in the cell inner membrane. Functionally, f(1)F(0) ATP synthase produces ATP from ADP in the presence of a proton or sodium gradient. F-type ATPases consist of two structural domains, F(1) containing the extramembraneous catalytic core and F(0) containing the membrane proton channel, linked together by a central stalk and a peripheral stalk. During catalysis, ATP synthesis in the catalytic domain of F(1) is coupled via a rotary mechanism of the central stalk subunits to proton translocation. Component of the F(0) channel, it forms part of the peripheral stalk, linking F(1) to F(0). In Paraburkholderia phymatum (strain DSM 17167 / CIP 108236 / LMG 21445 / STM815) (Burkholderia phymatum), this protein is ATP synthase subunit b.